Here is a 425-residue protein sequence, read N- to C-terminus: 2,3-diketo-L-gulonate TRAP transporter large permease protein YiaN (425 aa).

11 helical membrane passes run 3–23 (VLIF…IAWA), 54–74 (FSLL…AGGL), 93–113 (LGYV…SAVA), 139–159 (LIAS…FIIF), 170–190 (LFMA…LTWW), 209–229 (IWHS…IIGG), 235–255 (FTPT…ATVI), 277–297 (VVMF…IAEL), 314–334 (LLFI…DLTP), 355–375 (IYFG…PPIG), and 399–419 (YVLV…LIIL).

Belongs to the TRAP transporter large permease family. In terms of assembly, the complex comprises the extracytoplasmic solute receptor protein YiaO, and the two transmembrane proteins YiaM and YiaN.

It is found in the cell inner membrane. In terms of biological role, part of the tripartite ATP-independent periplasmic (TRAP) transport system YiaMNO involved in the uptake of 2,3-diketo-L-gulonate. The polypeptide is 2,3-diketo-L-gulonate TRAP transporter large permease protein YiaN (yiaN) (Escherichia coli (strain K12)).